The chain runs to 288 residues: Type II iodothyronine deiodinase (288 aa).

The Lumenal segment spans residues 1-5 (MPHVN). Residues 6–26 (LLVVLLILPGVFSNCLFLALY) form a helical; Signal-anchor for type III membrane protein membrane-spanning segment. Residues 27-288 (DAVSFLRRAL…SFLESVKASR (262 aa)) are Cytoplasmic-facing. The tract at residues 99–130 (SCAASSSSSHETPTPRTTAEAAATVTTSTTTT) is disordered. The active site involves selenocysteine 160. Residue selenocysteine 160 is a non-standard amino acid, selenocysteine.

Belongs to the iodothyronine deiodinase family. As to quaternary structure, predominantly monomer. Can form homodimers but homodimerization is not essential for enzyme activity. As to expression, expressed in intestine, liver, kidney and brain of immediately premetamorphic larvae, of larvae in all stages of metamorphosis and of parasitic feeding juveniles. In immediately premetamorphic larvae, levels are significantly higher in intestine and liver than in kidney and brain.

It localises to the endoplasmic reticulum membrane. It carries out the reaction 3,3',5-triiodo-L-thyronine + iodide + A + H(+) = L-thyroxine + AH2. The enzyme catalyses 3,3'-diiodo-L-thyronine + iodide + A + H(+) = 3,3',5'-triiodo-L-thyronine + AH2. The catalysed reaction is 3'-iodo-L-thyronine + iodide + A + H(+) = 3',5'-diiodo-L-thyronine + AH2. It catalyses the reaction 3,3'-diiodothyronamine + iodide + A + H(+) = 3,3',5'-triiodothyronamine + AH2. It carries out the reaction 3'-iodothyronamine + iodide + A + H(+) = 3',5'-diiodothyronamine + AH2. In terms of biological role, plays a crucial role in the metabolism of thyroid hormones (TH) and has specific roles in TH activation and inactivation by deiodination. Catalyzes the deiodination of L-thyroxine (T4) to 3,5,3'-triiodothyronine (T3), 3,3',5'-triiodothyronine (rT3) to 3,3'-diiodothyronine (3,3'-T2) and 3',5'-diiodothyronine (3',5'-T2) to 3'-monoiodothyronine (3'-T1) via outer-ring deiodination (ORD). Catalyzes the phenolic ring deiodinations of 3,3',5'-triiodothyronamine and 3',5'- diiodothyronamine. In Petromyzon marinus (Sea lamprey), this protein is Type II iodothyronine deiodinase.